Here is a 287-residue protein sequence, read N- to C-terminus: L-cysteine S-thiosulfotransferase subunit SoxA (287 aa).

The first 26 residues, M1–A26, serve as a signal peptide directing secretion. The Cytochrome c domain occupies D74–S168. Heme c is bound by residues C102, C105, H106, C140, C203, C206, and H207. R244 is a substrate binding site. Residue C248 coordinates heme c. The active-site Cysteine persulfide intermediate is C248.

The protein belongs to the SoxA family. In terms of assembly, heterodimer of SoxA and SoxX. Heme c serves as cofactor. Post-translationally, cysteine persulfide at Cys-248.

The protein localises to the periplasm. The catalysed reaction is L-cysteinyl-[SoxY protein] + thiosulfate + 2 Fe(III)-[cytochrome c] = S-sulfosulfanyl-L-cysteinyl-[SoxY protein] + 2 Fe(II)-[cytochrome c] + 2 H(+). It carries out the reaction S-sulfanyl-L-cysteinyl-[SoxY protein] + thiosulfate + 2 Fe(III)-[cytochrome c] = S-(2-sulfodisulfanyl)-L-cysteinyl-[SoxY protein] + 2 Fe(II)-[cytochrome c] + 2 H(+). Its function is as follows. C-type diheme cytochrome, which is part of the SoxAX cytochrome complex involved in sulfur oxidation. The SoxAX complex catalyzes the formation of a heterodisulfide bond between the conserved cysteine residue on a sulfur carrier SoxYZ complex subunit SoxY and thiosulfate or other inorganic sulfur substrates. This leads to the liberation of two electrons, which may be transferred from the SoxAX complex to another cytochrome c and which then may be used for reductive CO(2) fixation. The polypeptide is L-cysteine S-thiosulfotransferase subunit SoxA (Rhodovulum sulfidophilum (Rhodobacter sulfidophilus)).